The primary structure comprises 265 residues: 4-hydroxy-tetrahydrodipicolinate reductase (265 aa).

Residues 9 to 14 (GALGRM), 100 to 102 (GTT), and 124 to 127 (SPNM) contribute to the NAD(+) site. The Proton donor/acceptor role is filled by histidine 158. Residue histidine 159 coordinates (S)-2,3,4,5-tetrahydrodipicolinate. Lysine 162 (proton donor) is an active-site residue. 168 to 169 (GT) provides a ligand contact to (S)-2,3,4,5-tetrahydrodipicolinate.

Belongs to the DapB family.

It localises to the cytoplasm. The enzyme catalyses (S)-2,3,4,5-tetrahydrodipicolinate + NAD(+) + H2O = (2S,4S)-4-hydroxy-2,3,4,5-tetrahydrodipicolinate + NADH + H(+). It carries out the reaction (S)-2,3,4,5-tetrahydrodipicolinate + NADP(+) + H2O = (2S,4S)-4-hydroxy-2,3,4,5-tetrahydrodipicolinate + NADPH + H(+). It participates in amino-acid biosynthesis; L-lysine biosynthesis via DAP pathway; (S)-tetrahydrodipicolinate from L-aspartate: step 4/4. Functionally, catalyzes the conversion of 4-hydroxy-tetrahydrodipicolinate (HTPA) to tetrahydrodipicolinate. The chain is 4-hydroxy-tetrahydrodipicolinate reductase from Aquifex aeolicus (strain VF5).